The chain runs to 145 residues: Nucleoside diphosphate kinase (145 aa).

The ATP site is built by Lys11, Phe59, Arg87, Thr93, Arg104, and Asn114. The active-site Pros-phosphohistidine intermediate is the His117.

It belongs to the NDK family. In terms of assembly, homotetramer. Requires Mg(2+) as cofactor.

Its subcellular location is the cytoplasm. The enzyme catalyses a 2'-deoxyribonucleoside 5'-diphosphate + ATP = a 2'-deoxyribonucleoside 5'-triphosphate + ADP. The catalysed reaction is a ribonucleoside 5'-diphosphate + ATP = a ribonucleoside 5'-triphosphate + ADP. In terms of biological role, major role in the synthesis of nucleoside triphosphates other than ATP. The ATP gamma phosphate is transferred to the NDP beta phosphate via a ping-pong mechanism, using a phosphorylated active-site intermediate. This chain is Nucleoside diphosphate kinase, found in Myxococcus xanthus.